A 190-amino-acid chain; its full sequence is (S)-2-hydroxypropylphosphonic acid epoxidase (190 aa).

The HTH cro/C1-type domain occupies 10–60 (KAHLEALLATRKMTLEHLQDVRHDATQVYFDGLEHLQNVAQYLAIPLSEFF). A DNA-binding region (H-T-H motif) is located at residues 20-40 (RKMTLEHLQDVRHDATQVYFD). Substrate contacts are provided by residues arginine 87, tyrosine 95, 125–128 (NGGH), and glutamate 132. Histidine 128, glutamate 132, and histidine 171 together coordinate Fe cation. Positions 128-176 (HGSREIVYVTRGAVRVRWVGDNDELKEDVLNEGDSIFILPNVPHSFTNH) constitute a Cupin type-2 domain.

Belongs to the non-heme iron-dependent dioxygenase family. As to quaternary structure, homotrimer. Requires Fe(2+) as cofactor.

The catalysed reaction is (S)-2-hydroxypropylphosphonate + H2O2 = (1R,2S)-epoxypropylphosphonate + 2 H2O. It participates in antibiotic biosynthesis; fosfomycin biosynthesis. In terms of biological role, non-heme-dependent dioxygenase that catalyzes the oxidative epoxidation of (S)-2-hydroxypropylphosphonate into (1R,2S)-epoxypropylphosphonate, the final step in the biosynthesis of fosfomycin antibiotic. This chain is (S)-2-hydroxypropylphosphonic acid epoxidase (hppE), found in Pseudomonas syringae.